The sequence spans 293 residues: Cytosolic Fe-S cluster assembly factor CFD1 (293 aa).

Residue 25-32 participates in ATP binding; the sequence is GKGGVGKS. Cysteine 201 and cysteine 204 together coordinate [4Fe-4S] cluster. Serine 291 carries the post-translational modification Phosphoserine.

Belongs to the Mrp/NBP35 ATP-binding proteins family. NUBP2/CFD1 subfamily. As to quaternary structure, heterotetramer of 2 NBP35 and 2 CFD1 chains. The cofactor is [4Fe-4S] cluster.

It localises to the cytoplasm. Its function is as follows. Component of the cytosolic iron-sulfur (Fe/S) protein assembly (CIA) machinery. Required for maturation of extramitochondrial Fe-S proteins. The NBP35-CFD1 heterotetramer forms a Fe-S scaffold complex, mediating the de novo assembly of an Fe-S cluster and its transfer to target apoproteins. Nucleotide binding/hydrolysis seems to be critcal for loading of Fe-S clusters onto CFD1 and NBP35. Required for biogenesis and export of both ribosomal subunits, which may reflect a role in assembly of the Fe/S clusters in RLI1, a protein which performs rRNA processing and ribosome export. This is Cytosolic Fe-S cluster assembly factor CFD1 from Saccharomyces cerevisiae (strain ATCC 204508 / S288c) (Baker's yeast).